Reading from the N-terminus, the 100-residue chain is Large ribosomal subunit protein uL23 (100 aa).

This sequence belongs to the universal ribosomal protein uL23 family. As to quaternary structure, part of the 50S ribosomal subunit. Contacts protein L29, and trigger factor when it is bound to the ribosome.

One of the early assembly proteins it binds 23S rRNA. One of the proteins that surrounds the polypeptide exit tunnel on the outside of the ribosome. Forms the main docking site for trigger factor binding to the ribosome. This chain is Large ribosomal subunit protein uL23, found in Pseudoalteromonas translucida (strain TAC 125).